A 688-amino-acid chain; its full sequence is MKEKENSLFNSKMIKRAMKDSFIKLNPKIQLQNPVMFIVYIASILTTVLYVFSLFGIKDNSPSFILFISILLWFTVLFANFAEAIAEGRGKAQADALRSAKKDILANRIESIETKEKVSKVNSTELRKGDLIIVKAGEQIPADGDVVYGAASVDESAITGESAPVIRESGGDRSAVTGGTQVISDYIVVKVSNNPGESFMDKMIAMVEGASRKKTPNEIALQILLVSLTIIFLVVTASLYAYSEFASNQNGVINSTSVTSLLALLVCLAPTTIGALLSAIGIAGMSRLNQANVLAMSGRAIEAAGDVDILMLDKTGTITLGNRQASEFLPVDGANIEELADAAQLSSLADETPEGRSIVILAKEQFGIRGRDLSSSNAKFIEFTAKTRMSGVDFNGDEIRKGSAESIKKYITEHGGDFSDECEKKVEEIARKGGTPLVVAKNYKVLGIIYLKDIVKRGVKEKFSDLRKMGIKTIMITGDNPLTAAAIAAEAGVDDFLAEATPEGKLNMIKDFQKKGHLVAMTGDGTNDAPALAQADVAVAMNTGTQAAKEAGNMVDLDSSPTKLIEIVKIGKQLLMTRGALTTFSIANDIAKYFAIIPPLFIGLFPELSRLNIMNLQSPESAILSAVIYNAFIIIFLIPLALKGVKYREVSANKLLSRNLFVYGLGGIIAPFIAIKGIDILITMLGIV.

4 helical membrane-spanning segments follow: residues 37 to 57, 65 to 85, 219 to 239, and 262 to 282; these read FIVY…LFGI, ILFI…AEAI, IALQ…TASL, and LALL…AIGI. D313 (4-aspartylphosphate intermediate) is an active-site residue. ATP-binding positions include D350, E354, 383-390, and K401; that span reads FTAKTRMS. Mg(2+) contacts are provided by D524 and D528. 3 helical membrane-spanning segments follow: residues 586–606, 622–642, and 668–688; these read IAND…GLFP, AILS…PLAL, and IIAP…LGIV.

The protein belongs to the cation transport ATPase (P-type) (TC 3.A.3) family. Type IA subfamily. The system is composed of three essential subunits: KdpA, KdpB and KdpC.

It localises to the cell membrane. The enzyme catalyses K(+)(out) + ATP + H2O = K(+)(in) + ADP + phosphate + H(+). Part of the high-affinity ATP-driven potassium transport (or Kdp) system, which catalyzes the hydrolysis of ATP coupled with the electrogenic transport of potassium into the cytoplasm. This subunit is responsible for energy coupling to the transport system and for the release of the potassium ions to the cytoplasm. This is Potassium-transporting ATPase ATP-binding subunit from Clostridium perfringens (strain ATCC 13124 / DSM 756 / JCM 1290 / NCIMB 6125 / NCTC 8237 / Type A).